A 129-amino-acid polypeptide reads, in one-letter code: QFQKPGDAIEYRQSAFTLIANHFGRVAAMAQGKAPFDAKVAAENIALVSTLSKLPLTAFGPGTDKGHGTEAKPAVWSDAAGFKAAADKFAAAVDKLDAAGKTGDFAQIKAAVGETGGACKGCHDKFKEK.

Heme c contacts are provided by Arg-12, Gln-13, Thr-69, Glu-70, Cys-119, Cys-122, and His-123.

Binds 1 heme c group covalently per subunit.

Cytochrome c' is the most widely occurring bacterial c-type cytochrome. Cytochromes c' are high-spin proteins and the heme has no sixth ligand. Their exact function is not known. The sequence is that of Cytochrome c' from Rubrivivax gelatinosus (Rhodocyclus gelatinosus).